Consider the following 384-residue polypeptide: Protein RecA (384 aa).

Position 76–83 (76–83 (GPESSGKT)) interacts with ATP. The tract at residues 346 to 365 (QGSAEPEKAAKPEKVEKADK) is disordered. Residues 350 to 365 (EPEKAAKPEKVEKADK) are compositionally biased toward basic and acidic residues.

The protein belongs to the RecA family.

The protein localises to the cytoplasm. Can catalyze the hydrolysis of ATP in the presence of single-stranded DNA, the ATP-dependent uptake of single-stranded DNA by duplex DNA, and the ATP-dependent hybridization of homologous single-stranded DNAs. It interacts with LexA causing its activation and leading to its autocatalytic cleavage. In Polaromonas naphthalenivorans (strain CJ2), this protein is Protein RecA.